The primary structure comprises 1030 residues: Leucine-rich repeat and coiled-coil domain-containing protein 1 (1030 aa).

LRR repeat units lie at residues 7 to 28 (RNRE…CLNS), 29 to 50 (NLYS…RHLC), 51 to 72 (YLQH…DSLA), 73 to 94 (SLQS…EKLF), 95 to 116 (NLKK…IPLH), and 121 to 142 (KLSH…LQST). Residues 160–200 (NPVCHALGYREIILENLPQLNSLDGLDRSGDPVTAHEVDSM) enclose the LRRCT domain. The disordered stretch occupies residues 298–401 (KSEQTKLKAK…GQILGKPHAI (104 aa)). Residues 300–311 (EQTKLKAKRDTD) show a composition bias toward basic and acidic residues. 2 stretches are compositionally biased toward polar residues: residues 338-368 (KTSQ…SRKQ) and 378-393 (ETSL…STGQ). A coiled-coil region spans residues 432 to 645 (RERRWKAEQV…DLEDEFRAAL (214 aa)).

This sequence belongs to the LRRCC1 family.

It is found in the cytoplasm. Its subcellular location is the cytoskeleton. It localises to the microtubule organizing center. The protein localises to the centrosome. The protein resides in the centriole. Its function is as follows. Required for the organization of the mitotic spindle. Maintains the structural integrity of centrosomes during mitosis. The polypeptide is Leucine-rich repeat and coiled-coil domain-containing protein 1 (lrrcc1) (Xenopus laevis (African clawed frog)).